The sequence spans 254 residues: Large ribosomal subunit protein uL4 (254 aa).

The protein belongs to the universal ribosomal protein uL4 family. Part of the 50S ribosomal subunit.

One of the primary rRNA binding proteins, this protein initially binds near the 5'-end of the 23S rRNA. It is important during the early stages of 50S assembly. It makes multiple contacts with different domains of the 23S rRNA in the assembled 50S subunit and ribosome. In terms of biological role, forms part of the polypeptide exit tunnel. The chain is Large ribosomal subunit protein uL4 from Methanothermobacter thermautotrophicus (strain ATCC 29096 / DSM 1053 / JCM 10044 / NBRC 100330 / Delta H) (Methanobacterium thermoautotrophicum).